The sequence spans 205 residues: Ras-related protein Rab-1A (205 aa).

Residues 18 to 26 (GDSGVGKSC), 36 to 43 (YTESYIST), 66 to 70 (DTAGQ), 124 to 127 (NKSD), and 154 to 156 (SAK) contribute to the GTP site. An Effector region motif is present at residues 40–48 (YISTIGVDF). The segment covering 183–198 (SDSKPSVKINSSTPVS) has biased composition (polar residues). The segment at 183–205 (SDSKPSVKINSSTPVSANKGGCC) is disordered. S-geranylgeranyl cysteine attachment occurs at residues C204 and C205.

The protein belongs to the small GTPase superfamily. Rab family.

The protein resides in the golgi apparatus. It localises to the endoplasmic reticulum. Its function is as follows. Probably required for transit of protein from the ER through Golgi compartment. This is Ras-related protein Rab-1A (RAB1A) from Lymnaea stagnalis (Great pond snail).